A 927-amino-acid polypeptide reads, in one-letter code: Phosphoenolpyruvate carboxylase (927 aa).

Active-site residues include H160 and K589.

It belongs to the PEPCase type 1 family. Mg(2+) serves as cofactor.

The enzyme catalyses oxaloacetate + phosphate = phosphoenolpyruvate + hydrogencarbonate. Functionally, forms oxaloacetate, a four-carbon dicarboxylic acid source for the tricarboxylic acid cycle. The chain is Phosphoenolpyruvate carboxylase from Rhodopseudomonas palustris (strain BisA53).